Here is a 61-residue protein sequence, read N- to C-terminus: UPF0434 protein Pmen_1615 (61 aa).

Belongs to the UPF0434 family.

In Ectopseudomonas mendocina (strain ymp) (Pseudomonas mendocina), this protein is UPF0434 protein Pmen_1615.